The primary structure comprises 459 residues: MKMKPPVEKNEYYDVTFEDLTHEGAGVAKVQGFPIFVPNALPEEKAQIKVTRVKKGFAFGRLIELKEESPHRTDAPCPIYKQCGGCQLQHMTYEGQLLFKQKQVKDVLERIGKLDLSKVTVHPTLGMEDPWNYRNKAQVPVGEREGGLVAGFYQQRSHDIIDMSACLIQQSKNDEAVQAVKDICANYGVKAYNEERHKGWLRHIMVRYGVVTGEMMIVFITRTSDFPHKAKIIEDITAQFPHVKSIVQNINPNKTNVIFGNETNVIWGEEYIYDLIGDVKFAISARSFYQVNPEQTKVLYDKALEYAELQGEETVIDAYCGIGTISLFLAKQAKKVYGVEIVPEAIEDAKRNAELNGNTNAEFAVGEAETVIPKWYEEGITADTLVVDPPRKGCDEALLRTIVEMKPKRVVYVSCNPGTLARDLRVLEDGGYVTREVQPVDMFPHTNHVECCVLIKLKE.

The TRAM domain occupies 6–64; sequence PVEKNEYYDVTFEDLTHEGAGVAKVQGFPIFVPNALPEEKAQIKVTRVKKGFAFGRLIE. [4Fe-4S] cluster contacts are provided by cysteine 77, cysteine 83, cysteine 86, and cysteine 166. Residues glutamine 290, tyrosine 319, glutamate 340, and aspartate 388 each coordinate S-adenosyl-L-methionine. Cysteine 415 acts as the Nucleophile in catalysis.

This sequence belongs to the class I-like SAM-binding methyltransferase superfamily. RNA M5U methyltransferase family.

The enzyme catalyses uridine(747) in 23S rRNA + S-adenosyl-L-methionine = 5-methyluridine(747) in 23S rRNA + S-adenosyl-L-homocysteine + H(+). It carries out the reaction uridine(1939) in 23S rRNA + S-adenosyl-L-methionine = 5-methyluridine(1939) in 23S rRNA + S-adenosyl-L-homocysteine + H(+). Catalyzes the formation of 5-methyl-uridine at positions 747 (m5U747) and 1939 (m5U1939) in 23S rRNA. This Bacillus subtilis (strain 168) protein is 23S rRNA (uracil-C(5))-methyltransferase RlmCD (rlmCD).